A 329-amino-acid chain; its full sequence is Two pore potassium channel protein sup-9 (329 aa).

The Cytoplasmic segment spans residues 1–8; the sequence is MKRQNIRT. The chain crosses the membrane as a helical span at residues 9–29; sequence LSLIVCTLTYLLVGAAVFDAL. N-linked (GlcNAc...) asparagine glycosylation occurs at asparagine 53. The segment at residues 80-100 is an intramembrane region (pore-forming); the sequence is FSGAFYFATTVITTIGYGHST. A Selectivity filter motif is present at residues 93-98; that stretch reads TIGYGH. Residues 108–128 form a helical membrane-spanning segment; the sequence is VFCMLYALAGIPLGLIMFQSI. The Cytoplasmic portion of the chain corresponds to 129–157; that stretch reads GERMNTFAAKLLRFIRRAAGKQPIVTSSD. The chain crosses the membrane as a helical span at residues 158–178; the sequence is LIIFCTGWGGLLIFGGAFMFS. The N-linked (GlcNAc...) asparagine glycan is linked to asparagine 182. Residues 186 to 206 constitute an intramembrane region (pore-forming); the sequence is FDAVYYCFVTLTTIGFGDYVA. The Selectivity filter signature appears at 198–203; the sequence is TIGFGD. Residues 220 to 240 form a helical membrane-spanning segment; the sequence is VFFSLVFILFGLTVISAAMNL. Residues 241–329 lie on the Cytoplasmic side of the membrane; sequence LVLRFLTMNT…FSGMTTRPKY (89 aa). The interval 289-296 is may be important for regulation by and/or interaction with sup-10; the sequence is SLASCSCY. The interval 307 to 329 is disordered; it reads HRKHTEPHGGPPTFSGMTTRPKY.

Belongs to the two pore domain potassium channel (TC 1.A.1.8) family. In terms of assembly, may form a complex with the regulatory subunits unc-93 and sup-10. In terms of tissue distribution, low levels along surface of body-wall muscle cells, in vulval and intestinal muscles and, more weakly, in anal depressor and sphincter muscles. Also expressed in a subset of head neurons.

The protein resides in the membrane. Potassium channel involved in coordination of muscle contraction. Activity is regulated by sup-18. In Caenorhabditis elegans, this protein is Two pore potassium channel protein sup-9.